The primary structure comprises 350 residues: Phosphoribosylformylglycinamidine cyclo-ligase (350 aa).

The protein belongs to the AIR synthase family.

The protein resides in the cytoplasm. It carries out the reaction 2-formamido-N(1)-(5-O-phospho-beta-D-ribosyl)acetamidine + ATP = 5-amino-1-(5-phospho-beta-D-ribosyl)imidazole + ADP + phosphate + H(+). It functions in the pathway purine metabolism; IMP biosynthesis via de novo pathway; 5-amino-1-(5-phospho-D-ribosyl)imidazole from N(2)-formyl-N(1)-(5-phospho-D-ribosyl)glycinamide: step 2/2. The sequence is that of Phosphoribosylformylglycinamidine cyclo-ligase from Syntrophotalea carbinolica (strain DSM 2380 / NBRC 103641 / GraBd1) (Pelobacter carbinolicus).